We begin with the raw amino-acid sequence, 342 residues long: N-acetyl-gamma-glutamyl-phosphate reductase (342 aa).

C147 is an active-site residue.

It belongs to the NAGSA dehydrogenase family. Type 1 subfamily.

It localises to the cytoplasm. It catalyses the reaction N-acetyl-L-glutamate 5-semialdehyde + phosphate + NADP(+) = N-acetyl-L-glutamyl 5-phosphate + NADPH + H(+). It functions in the pathway amino-acid biosynthesis; L-arginine biosynthesis; N(2)-acetyl-L-ornithine from L-glutamate: step 3/4. Catalyzes the NADPH-dependent reduction of N-acetyl-5-glutamyl phosphate to yield N-acetyl-L-glutamate 5-semialdehyde. This chain is N-acetyl-gamma-glutamyl-phosphate reductase, found in Campylobacter jejuni subsp. jejuni serotype O:23/36 (strain 81-176).